A 141-amino-acid polypeptide reads, in one-letter code: Hemoglobin subunit alpha-D (141 aa).

The Globin domain occupies 1–141; the sequence is VLTHEDCELL…VGDMLAEKYR (141 aa). Residues H58 and H87 each coordinate heme b.

It belongs to the globin family. There are three forms of hemoglobin in Sphenodon: A, A' and D. Hb A is a tetramer of two alpha-A and two beta-1, Hb A' is a tetramer of two alpha-a and two beta-2, Hb D is a tetramer of two alpha-D and two beta-2. As to expression, red blood cells.

In terms of biological role, involved in oxygen transport from the lung to the various peripheral tissues. This Sphenodon punctatus (Tuatara) protein is Hemoglobin subunit alpha-D (HBAD).